Reading from the N-terminus, the 196-residue chain is Indolepyruvate oxidoreductase subunit IorB (196 aa).

Heterodimer of the IorA and IorB subunits.

It carries out the reaction indole-3-pyruvate + 2 oxidized [2Fe-2S]-[ferredoxin] + CoA = (indol-3-yl)acetyl-CoA + 2 reduced [2Fe-2S]-[ferredoxin] + CO2 + H(+). Functionally, catalyzes the ferredoxin-dependent oxidative decarboxylation of arylpyruvates. This Methanothermobacter thermautotrophicus (strain ATCC 29096 / DSM 1053 / JCM 10044 / NBRC 100330 / Delta H) (Methanobacterium thermoautotrophicum) protein is Indolepyruvate oxidoreductase subunit IorB (iorB).